A 364-amino-acid polypeptide reads, in one-letter code: Chorismate synthase (364 aa).

Arg-48 and Arg-54 together coordinate NADP(+). FMN-binding positions include 125–127 (RSS), Gly-282, 297–301 (KPPAS), and Arg-323.

Belongs to the chorismate synthase family. Homotetramer. The cofactor is FMNH2.

The enzyme catalyses 5-O-(1-carboxyvinyl)-3-phosphoshikimate = chorismate + phosphate. The protein operates within metabolic intermediate biosynthesis; chorismate biosynthesis; chorismate from D-erythrose 4-phosphate and phosphoenolpyruvate: step 7/7. Its function is as follows. Catalyzes the anti-1,4-elimination of the C-3 phosphate and the C-6 proR hydrogen from 5-enolpyruvylshikimate-3-phosphate (EPSP) to yield chorismate, which is the branch point compound that serves as the starting substrate for the three terminal pathways of aromatic amino acid biosynthesis. This reaction introduces a second double bond into the aromatic ring system. The sequence is that of Chorismate synthase from Chloroflexus aggregans (strain MD-66 / DSM 9485).